The following is an 84-amino-acid chain: UPF0320 protein YNR077C (84 aa).

It belongs to the UPF0320 family.

The protein is UPF0320 protein YNR077C of Saccharomyces cerevisiae (strain ATCC 204508 / S288c) (Baker's yeast).